Consider the following 162-residue polypeptide: Cytochrome c-type biogenesis protein CcmE (162 aa).

Over 1–8 (MNPRRKKR) the chain is Cytoplasmic. A helical; Signal-anchor for type II membrane protein membrane pass occupies residues 9 to 29 (LALVVGLIGGVAAVASLLLYA). At 30 to 162 (LNTNLNLFYT…YTETQKGGSR (133 aa)) the chain is on the periplasmic side. Positions 131 and 135 each coordinate heme.

Belongs to the CcmE/CycJ family.

Its subcellular location is the cell inner membrane. Functionally, heme chaperone required for the biogenesis of c-type cytochromes. Transiently binds heme delivered by CcmC and transfers the heme to apo-cytochromes in a process facilitated by CcmF and CcmH. This chain is Cytochrome c-type biogenesis protein CcmE, found in Shewanella amazonensis (strain ATCC BAA-1098 / SB2B).